Consider the following 400-residue polypeptide: MKNIDEQIKIIKKGAEEIIDAKELKEKLIKAEKENTQLVVKLGLDPSAPDIHLGHAVVLRKLKQLQDLGHKIVIIIGDFTGMIGDPTGKSKTRKQLSSQQVMKNAETYEKQIFKILDRNKTDLRFNSQWLEKLNFKEVIELASKYTVARMLEREDFKKRFKNQQSIGIHEFFYPLMQAYDSMAIKADIEFGGTDQRFNLLMGRTLQAEYGEEKQIAIFMPLLEGIDGKEKMSKSLGNYIGIEESAKDMYVKVMQIPDSLIIKYFELCTDMHPDAIDIIRKQLNEDKVNPRDIKMKLAKEIVCLYHNEAEALNAEIYFKNLFQDKEIPEDIPIFKVRSENNLIEAIVKINSNTSKSEARRLIAQGGVKLNGRKVIDFNDIILKSNDVIQIGKKKIVKLLVE.

The 'HIGH' region motif lies at 46–55 (PSAPDIHLGH). The 'KMSKS' region motif lies at 230–234 (KMSKS). Lys233 contacts ATP. One can recognise an S4 RNA-binding domain in the interval 339 to 399 (NNLIEAIVKI…GKKKIVKLLV (61 aa)).

This sequence belongs to the class-I aminoacyl-tRNA synthetase family. TyrS type 2 subfamily. Homodimer.

The protein localises to the cytoplasm. The enzyme catalyses tRNA(Tyr) + L-tyrosine + ATP = L-tyrosyl-tRNA(Tyr) + AMP + diphosphate + H(+). Functionally, catalyzes the attachment of tyrosine to tRNA(Tyr) in a two-step reaction: tyrosine is first activated by ATP to form Tyr-AMP and then transferred to the acceptor end of tRNA(Tyr). The polypeptide is Tyrosine--tRNA ligase 2 (Clostridium acetobutylicum (strain ATCC 824 / DSM 792 / JCM 1419 / IAM 19013 / LMG 5710 / NBRC 13948 / NRRL B-527 / VKM B-1787 / 2291 / W)).